A 192-amino-acid polypeptide reads, in one-letter code: NF-kappa-B inhibitor-interacting Ras-like protein 1 (192 aa).

11–18 contributes to the GTP binding site; the sequence is GLLSVGKT. The Effector region signature appears at 35–43; that stretch reads DCETMEDVY. Positions 58–93 are interactions with NFKBIA and NFKBIB; it reads HLYDTRGLQEGVELPKHYFSFADGFVLVYSVNNLES. Residues 61-65 and 120-123 contribute to the GTP site; these read DTRGL and NKID. Residues 168 to 192 are disordered; the sequence is LSQPQSKSSFPLPGRKNKGNSNSEN.

Belongs to the small GTPase superfamily. Ras family. KappaB-Ras subfamily. Interacts with both NF-kappa-B inhibitor alpha (NFKBIA) and beta (NFKBIB) in vitro. However, it probably only interacts with NFKBIB in vivo. Forms a complex with NFKBIB and NF-kappa-B heterodimer (p50/NFKB1 and p65/RELA). Also interacts with c-Rel (REL). As to expression, widely expressed.

The protein resides in the cytoplasm. Atypical Ras-like protein that acts as a potent regulator of NF-kappa-B activity by preventing the degradation of NF-kappa-B inhibitor beta (NFKBIB) by most signals, explaining why NFKBIB is more resistant to degradation. May act by blocking phosphorylation of NFKBIB and mediating cytoplasmic retention of p65/RELA NF-kappa-B subunit. It is unclear whether it acts as a GTPase. Both GTP- and GDP-bound forms block phosphorylation of NFKBIB. This chain is NF-kappa-B inhibitor-interacting Ras-like protein 1 (NKIRAS1), found in Homo sapiens (Human).